A 116-amino-acid polypeptide reads, in one-letter code: G antigen 2B/2C (116 aa).

Residues 1 to 116 (MSWRGRSTYR…PEEGEKQSQC (116 aa)) form a disordered region. 2 stretches are compositionally biased toward acidic residues: residues 31–44 (FSDE…EEGE) and 86–95 (ECEDGPDGQE). Basic and acidic residues predominate over residues 102–116 (EEVKTPEEGEKQSQC).

Belongs to the GAGE family. As to expression, expressed in a variety of tumor tissues but not in normal tissues, except testis.

Functionally, antigen, recognized on melanoma by autologous cytolytic T-lymphocytes. The sequence is that of G antigen 2B/2C (GAGE2B) from Homo sapiens (Human).